The sequence spans 119 residues: RNA guanine-N7 methyltransferase activating subunit (119 aa).

Residues 1–55 (MSDTSEEIPNFEEMFASRFTKDDKEYQEYLKRPPESPPIVEEWNSRAGGNQRNRG) are interaction with RNMT. The tract at residues 30–119 (LKRPPESPPI…HNQRPPYGYY (90 aa)) is disordered. At Ser36 the chain carries Phosphoserine. Residues 36-42 (SPPIVEE) carry the RNMT-activating domain motif. Residues 47–61 (AGGNQRNRGNWLQDN) show a composition bias toward polar residues. The interval 56–119 (NWLQDNRQFR…HNQRPPYGYY (64 aa)) is RNA-binding. Positions 62-73 (RQFRGRDNRRGW) are enriched in basic and acidic residues. Arg85 carries the post-translational modification Omega-N-methylarginine. Ser86 bears the Phosphoserine mark. Over residues 89-112 (NNNYPQQRPEPYYQQQYTQYGHNQ) the composition is skewed to low complexity.

This sequence belongs to the RAM family. Interacts with RNMT; this interaction enhances mRNA binding and cap methyltransferase activity.

It is found in the nucleus. In terms of biological role, regulatory subunit of the mRNA-capping methyltransferase RNMT:RAMAC complex that methylates the N7 position of the added guanosine to the 5'-cap structure of mRNAs. Promotes the recruitment of the methyl donor, S-adenosyl-L-methionine, to RNMT. Regulates RNMT expression by a post-transcriptional stabilizing mechanism. Binds RNA. This chain is RNA guanine-N7 methyltransferase activating subunit (Ramac), found in Mus musculus (Mouse).